We begin with the raw amino-acid sequence, 559 residues long: MELRARGWWLLYAAAVLVACARGDPASKSRSCGEVRQIYGAKGFSLSDVPQAEISGEHLRICPQGYTCCTSEMEENLANRSRAELETALLEGTRALQATLAAQQRGFDDHFQRLLNDSERALQEAFPGAFGELYTQNAKAFRDLYAELRLYYGGANLHLQETLAEFWARLLERLFRQLHPQLLLPDDYLDCLGKQAEPLRPFGEAPRELRLRATRAFVAARTFVQGLGVAGDVVRKVAKVPLSPECSRAVMKLVYCAHCLGVPGARPCPDYCRNVLKGCLANQADLDAEWRNLLDSMVLITDKFWGPSGAESVVGGVHYWLAEAINALQDNSDTLTAKVIQGCGNPKVNPQGPGTEEKWPRGKLALQERPPAGTLQKLVSEAKAQLRDAQDFWISLPGTLCSEKLAMSSASDERCWNGMAKGRYLPEVMGDGLANQINNPEVEVDITKPDMTIRQQIMQLKIMTNRLRGAYNGNDLDFQDASDDGSGSGSGEGCPDEMCGRKVGRKSASSRTPLTHALPGLSEREGQQTSAAAPTPPQASPLLLLGLALALPAVAPRGR.

Positions 1–23 (MELRARGWWLLYAAAVLVACARG) are cleaved as a signal peptide. 7 disulfide bridges follow: Cys-32-Cys-68, Cys-62-Cys-256, Cys-69-Cys-259, Cys-191-Cys-343, Cys-246-Cys-279, Cys-268-Cys-415, and Cys-272-Cys-401. N-linked (GlcNAc...) asparagine glycosylation is found at Asn-79 and Asn-116. A disordered region spans residues 478–539 (FQDASDDGSG…SAAAPTPPQA (62 aa)). Residues Ser-486, Ser-488, and Ser-490 are each glycosylated (O-linked (Xyl...) (heparan sulfate) serine). Ser-530 is lipidated: GPI-anchor amidated serine. Residues 531-559 (AAAPTPPQASPLLLLGLALALPAVAPRGR) constitute a propeptide, removed in mature form.

Belongs to the glypican family. In terms of processing, S-nitrosylated in a Cu(2+)-dependent manner. Nitric acid (NO) is released from the nitrosylated cysteines by ascorbate or by some other reducing agent, in a Cu(2+) or Zn(2+) dependent manner. This free nitric oxide is then capable of cleaving the heparan sulfate side chains. N- and O-glycosylated. N-glycosylation is mainly of the complex type containing sialic acid. O-glycosylated with heparan sulfate. The heparan sulfate chains can be cleaved either by the action of heparanase or, degraded by a deaminative process that uses nitric oxide (NO) released from the S-nitrosylated cysteines. This process is triggered by ascorbate, or by some other reducing agent, in a Cu(2+)- or Zn(2+) dependent manner. Cu(2+) ions are provided by ceruloproteins such as APP, PRNP or CP which associate with GCP1 in intracellular compartments or lipid rafts. Post-translationally, shed from the cell surface probably by further cleavage.

The protein resides in the cell membrane. Its subcellular location is the endosome. It localises to the secreted. It is found in the extracellular space. Functionally, cell surface proteoglycan that bears heparan sulfate. Binds, via the heparan sulfate side chains, alpha-4 (V) collagen and participates in Schwann cell myelination. May act as a catalyst in increasing the rate of conversion of prion protein PRPN (C) to PRNP (Sc) via associating (via the heparan sulfate side chains) with both forms of PRPN, targeting them to lipid rafts and facilitating their interaction. Required for proper skeletal muscle differentiation by sequestering FGF2 in lipid rafts preventing its binding to receptors (FGFRs) and inhibiting the FGF-mediated signaling. In Bos taurus (Bovine), this protein is Glypican-1 (GPC1).